The chain runs to 200 residues: uncharacterized protein (200 aa).

Residues 1–21 form a disordered region; that stretch reads MSNSAQRDARNSRDESARASD. Residues 7–21 are compositionally biased toward basic and acidic residues; sequence RDARNSRDESARASD.

This is an uncharacterized protein from Mycobacterium tuberculosis (strain ATCC 25618 / H37Rv).